The sequence spans 620 residues: Chaperone protein HscA homolog (620 aa).

Belongs to the heat shock protein 70 family.

Its function is as follows. Chaperone involved in the maturation of iron-sulfur cluster-containing proteins. Has a low intrinsic ATPase activity which is markedly stimulated by HscB. The sequence is that of Chaperone protein HscA homolog from Neisseria meningitidis serogroup A / serotype 4A (strain DSM 15465 / Z2491).